The following is a 346-amino-acid chain: MIILGFESSCDETGVAAVCTERGLLAHALHTQIAMHQEYGGVVPELASRDHIRRVVPLTRQVLAEAGLTLADVGAVAYTAGPGLAGALLVGASVAQALAWSRALPAIGIHHLEGHLLSPLLAEPRPEFPFVALLVSGGHTQLMLVDGVGRYELLGETLDDAAGEAFDKSAKLMGLGYPGGPALARLAEQGDASRYDLPRPMLHSGDLDFSFSGLKTAVLTRVKAATRDGGELGEQDRADLAAATQAAIVEVLAAKAIRALKQTGLRRLVVAGGVGANALLRAHLARALKPLRAEAYFPPLSLCTDNGAMIAFAAAERVKAGLADLREGDHAFTVRPRWDLADIQAG.

Fe cation-binding residues include His111 and His115. Substrate is bound by residues 134–138 (LVSGG), Asp167, Gly180, and Asn277. Asp305 lines the Fe cation pocket.

The protein belongs to the KAE1 / TsaD family. It depends on Fe(2+) as a cofactor.

It is found in the cytoplasm. It carries out the reaction L-threonylcarbamoyladenylate + adenosine(37) in tRNA = N(6)-L-threonylcarbamoyladenosine(37) in tRNA + AMP + H(+). Required for the formation of a threonylcarbamoyl group on adenosine at position 37 (t(6)A37) in tRNAs that read codons beginning with adenine. Is involved in the transfer of the threonylcarbamoyl moiety of threonylcarbamoyl-AMP (TC-AMP) to the N6 group of A37, together with TsaE and TsaB. TsaD likely plays a direct catalytic role in this reaction. The sequence is that of tRNA N6-adenosine threonylcarbamoyltransferase from Bordetella pertussis (strain Tohama I / ATCC BAA-589 / NCTC 13251).